A 411-amino-acid polypeptide reads, in one-letter code: Argininosuccinate synthase (411 aa).

ATP contacts are provided by residues 10 to 18 and Ala37; that span reads AYSGGLDTS. L-citrulline contacts are provided by Tyr89 and Ser94. ATP is bound at residue Gly119. Residues Thr121, Asn125, and Asp126 each coordinate L-aspartate. Position 125 (Asn125) interacts with L-citrulline. Residues Arg129, Ser178, Ser187, Glu263, and Tyr275 each coordinate L-citrulline.

The protein belongs to the argininosuccinate synthase family. Type 1 subfamily. As to quaternary structure, homotetramer.

It is found in the cytoplasm. The catalysed reaction is L-citrulline + L-aspartate + ATP = 2-(N(omega)-L-arginino)succinate + AMP + diphosphate + H(+). Its pathway is amino-acid biosynthesis; L-arginine biosynthesis; L-arginine from L-ornithine and carbamoyl phosphate: step 2/3. This is Argininosuccinate synthase from Aeromonas salmonicida (strain A449).